The following is a 258-amino-acid chain: MSSQPFTNKVIALTGSASGIGLETAKLLASRGARLSLADIQEDKLKELQAXXESEYHVDVITTKVDVRKFGEVEAWINKTIDNFGKLDGSANLAGVAPESIGLKGIVEQDLDEWEFVLGVNLTGTMNSLKAQLKVMANNGSIVNASSIRGLTGAAKNASYSSAKHGIIGLTRTAAKEVGGKGIRVNAICPGRISTPMLKTAENSIGLHLQPGSANYPPIALGRDGEAKEVAQLVAFLLSDESTYISGADISIDGGWRC.

Residues Ile20, Asp66, and Lys130 each coordinate NADP(+). Active-site proton donor residues include Ser146 and Tyr160. Residues Tyr160, Lys164, Ile193, and Thr195 each contribute to the NADP(+) site. Residue Lys164 is the Lowers pKa of active site Tyr of the active site.

Belongs to the short-chain dehydrogenases/reductases (SDR) family.

Its pathway is hormone biosynthesis. In terms of biological role, short-chain dehydrogenase/reductase; part of the gene cluster that mediates the biosynthesis of abscisic acid (ABA), a phytohormone that acts antagonistically toward salicylic acid (SA), jasmonic acid (JA) and ethylene (ETH) signaling, to impede plant defense responses. The first step of the pathway catalyzes the reaction from farnesyl diphosphate to alpha-ionylideneethane performed by the alpha-ionylideneethane synthase aba3 via a three-step reaction mechanism involving 2 neutral intermediates, beta-farnesene and allofarnesene. The cytochrome P450 monooxygenase aba1 might then be involved in the conversion of alpha-ionylideneethane to alpha-ionylideneacetic acid. Alpha-ionylideneacetic acid is further converted to abscisic acid in 2 steps involving the cytochrome P450 monooxygenase aba2 and the short-chain dehydrogenase/reductase aba4, via the intermediates 1'-deoxy-ABA or 1',4'-trans-diol-ABA, depending on the order of action of these 2 enzymes. Aba2 is responsible for the hydroxylation of carbon atom C-1' and aba4 might be involved in the oxidation of the C-4' carbon atom. The protein is Short-chain dehydrogenase/reductase aba4 of Botryotinia fuckeliana (Noble rot fungus).